A 338-amino-acid polypeptide reads, in one-letter code: Nicotinate-nucleotide--dimethylbenzimidazole phosphoribosyltransferase (338 aa).

Residue Glu-305 is the Proton acceptor of the active site.

The protein belongs to the CobT family.

It carries out the reaction 5,6-dimethylbenzimidazole + nicotinate beta-D-ribonucleotide = alpha-ribazole 5'-phosphate + nicotinate + H(+). It participates in nucleoside biosynthesis; alpha-ribazole biosynthesis; alpha-ribazole from 5,6-dimethylbenzimidazole: step 1/2. Its function is as follows. Catalyzes the synthesis of alpha-ribazole-5'-phosphate from nicotinate mononucleotide (NAMN) and 5,6-dimethylbenzimidazole (DMB). In Rhizobium meliloti (strain 1021) (Ensifer meliloti), this protein is Nicotinate-nucleotide--dimethylbenzimidazole phosphoribosyltransferase.